The primary structure comprises 98 residues: NADH-ubiquinone oxidoreductase chain 4L (98 aa).

A run of 3 helical transmembrane segments spans residues Met1–Met21, Ser28–Ile48, and Ala59–Val79.

The protein belongs to the complex I subunit 4L family. In terms of assembly, core subunit of respiratory chain NADH dehydrogenase (Complex I) which is composed of 45 different subunits.

It localises to the mitochondrion inner membrane. It catalyses the reaction a ubiquinone + NADH + 5 H(+)(in) = a ubiquinol + NAD(+) + 4 H(+)(out). Its function is as follows. Core subunit of the mitochondrial membrane respiratory chain NADH dehydrogenase (Complex I) which catalyzes electron transfer from NADH through the respiratory chain, using ubiquinone as an electron acceptor. Part of the enzyme membrane arm which is embedded in the lipid bilayer and involved in proton translocation. The sequence is that of NADH-ubiquinone oxidoreductase chain 4L (MT-ND4L) from Phascolarctos cinereus (Koala).